The chain runs to 77 residues: RNA-binding protein Hfq (77 aa).

One can recognise a Sm domain in the interval 10–70 (DIFLNSARKN…ITTVTPEKPI (61 aa)).

It belongs to the Hfq family. Homohexamer.

In terms of biological role, RNA chaperone that binds small regulatory RNA (sRNAs) and mRNAs to facilitate mRNA translational regulation in response to envelope stress, environmental stress and changes in metabolite concentrations. Also binds with high specificity to tRNAs. This chain is RNA-binding protein Hfq, found in Clostridium botulinum (strain Eklund 17B / Type B).